We begin with the raw amino-acid sequence, 83 residues long: Apolipoprotein C-I, acidic form (83 aa).

The signal sequence occupies residues 1–26 (MRLFLSLPVLVVVLSMVLEGPAPAQG).

Belongs to the apolipoprotein C1 family.

It localises to the secreted. The protein is Apolipoprotein C-I, acidic form (APOC1A) of Pan troglodytes (Chimpanzee).